A 314-amino-acid chain; its full sequence is MRIPLVGKDSIESKDIGFTLIHEHLRVFSEAVRQQWPHLYNEDEEFRNAVNEVKRAMQFGVKTIVDPTVMGLGRDIRFMEKVVKATGINLVAGTGIYIYIDLPFYFLNRSIDEIADLFIHDIKEGIQGTLNKAGFVKIAADEPGITKDVEKVIRAAAIANKETKVPIITHSNAHNNTGLEQQRILTEEGVDPGKILIGHLGDTDNIDYIKKIADKGSFIGLDRYGLDLFLPVDKRNETTLRLIKDGYSDKIMISHDYCCTIDWGTAKPEYKPKLAPRWSITLIFEDTIPFLKRNGVNEEVIATIFKENPKKFFS.

Fe cation-binding residues include His22, His24, and Lys137. Residues Lys137, His170, and His199 each coordinate Co(2+). Lys137 is subject to N6-carboxylysine. Asp256 lines the Fe cation pocket.

The protein belongs to the metallo-dependent hydrolases superfamily. Phosphotriesterase family. As to quaternary structure, homodimer. The cofactor is Co(2+). Fe cation is required as a cofactor.

The catalysed reaction is An aryl dialkyl phosphate + H2O = dialkyl phosphate + an aryl alcohol.. Its activity is regulated as follows. Inactivated by EDTA and o-phenanthroline. Its function is as follows. Has a low paraoxonase activity. Also active, but with a lower activity, against other organo-phosphorus insecticides such as Dursban, Coumaphos, pNP-butanoate or parathion. The polypeptide is Aryldialkylphosphatase (php) (Saccharolobus solfataricus (strain ATCC 35092 / DSM 1617 / JCM 11322 / P2) (Sulfolobus solfataricus)).